The chain runs to 283 residues: Arylamine N-acetyltransferase (283 aa).

Catalysis depends on cysteine 70, which acts as the Acyl-thioester intermediate. Catalysis depends on residues histidine 110 and aspartate 127.

Belongs to the arylamine N-acetyltransferase family. Homodimer and homotetramer.

It catalyses the reaction an arylamine + acetyl-CoA = an N-acetylarylamine + CoA. Its function is as follows. Catalyzes the transfer of the acetyl group from acetyl coenzyme A to the free amino group of arylamines and hydrazines. Is able to utilize not only acetyl-CoA, but also n-propionyl-CoA and acetoacetyl-CoA as acyl donors, although at a lower rate. As acetyl-CoA and propionyl-CoA are products of cholesterol catabolism and the nat gene is likely present in the same operon than genes involved in cholesterol degradation, this enzyme could have a role in the utilization and regulation of these CoA species. In Mycobacterium bovis (strain ATCC BAA-935 / AF2122/97), this protein is Arylamine N-acetyltransferase (nat).